Reading from the N-terminus, the 202-residue chain is Large ribosomal subunit protein bL17 (202 aa).

The segment covering 130-142 has biased composition (low complexity); it reads AAPAATAPAPVEE. The interval 130-202 is disordered; it reads AAPAATAPAP…TEESTEDDKA (73 aa). 2 stretches are compositionally biased toward acidic residues: residues 143-168 and 177-202; these read APAE…EASP and QPVE…DDKA.

The protein belongs to the bacterial ribosomal protein bL17 family. Part of the 50S ribosomal subunit. Contacts protein L32.

This chain is Large ribosomal subunit protein bL17, found in Nocardioides sp. (strain ATCC BAA-499 / JS614).